The chain runs to 215 residues: Fibrillarin-like rRNA/tRNA 2'-O-methyltransferase (215 aa).

The interval 1–29 (MKASSSLPDGVQRRQFDNRSRLTTHGTTV) is disordered. Basic and acidic residues predominate over residues 11–20 (VQRRQFDNRS). S-adenosyl-L-methionine contacts are provided by residues 76–77 (TT), 92–93 (EF), 117–118 (DA), and 138–141 (DVAT).

This sequence belongs to the methyltransferase superfamily. Fibrillarin family. In terms of assembly, interacts with nop5. Component of box C/D small ribonucleoprotein (sRNP) particles that contain rpl7ae, FlpA and nop5, plus a guide RNA.

In terms of biological role, involved in pre-rRNA and tRNA processing. Utilizes the methyl donor S-adenosyl-L-methionine to catalyze the site-specific 2'-hydroxyl methylation of ribose moieties in rRNA and tRNA. Site specificity is provided by a guide RNA that base pairs with the substrate. Methylation occurs at a characteristic distance from the sequence involved in base pairing with the guide RNA. This Haloquadratum walsbyi (strain DSM 16790 / HBSQ001) protein is Fibrillarin-like rRNA/tRNA 2'-O-methyltransferase.